Here is a 397-residue protein sequence, read N- to C-terminus: CCA-adding enzyme (397 aa).

The ATP site is built by Gly27 and Arg30. The CTP site is built by Gly27 and Arg30. The Mg(2+) site is built by Asp40 and Asp42. ATP-binding residues include Arg111, Asp154, Arg157, Arg160, and Arg163. Residues Arg111, Asp154, Arg157, Arg160, and Arg163 each coordinate CTP.

It belongs to the tRNA nucleotidyltransferase/poly(A) polymerase family. Bacterial CCA-adding enzyme type 3 subfamily. Homodimer. The cofactor is Mg(2+).

It catalyses the reaction a tRNA precursor + 2 CTP + ATP = a tRNA with a 3' CCA end + 3 diphosphate. The enzyme catalyses a tRNA with a 3' CCA end + 2 CTP + ATP = a tRNA with a 3' CCACCA end + 3 diphosphate. In terms of biological role, catalyzes the addition and repair of the essential 3'-terminal CCA sequence in tRNAs without using a nucleic acid template. Adds these three nucleotides in the order of C, C, and A to the tRNA nucleotide-73, using CTP and ATP as substrates and producing inorganic pyrophosphate. Has no poly(A) polymerase activity. The protein is CCA-adding enzyme of Bacillus subtilis (strain 168).